The primary structure comprises 298 residues: Oxygen-dependent coproporphyrinogen-III oxidase (298 aa).

Ser-92 contributes to the substrate binding site. A divalent metal cation is bound by residues His-96 and His-106. His-106 acts as the Proton donor in catalysis. 108–110 (NVR) is a binding site for substrate. Residues His-145 and His-175 each contribute to the a divalent metal cation site. The segment at 239–274 (YVEFNLVYDRGTLFGLQSGGRSESILMSLPPRVRWE) is important for dimerization. 257–259 (GGR) provides a ligand contact to substrate.

It belongs to the aerobic coproporphyrinogen-III oxidase family. As to quaternary structure, homodimer. It depends on a divalent metal cation as a cofactor.

The protein localises to the cytoplasm. The catalysed reaction is coproporphyrinogen III + O2 + 2 H(+) = protoporphyrinogen IX + 2 CO2 + 2 H2O. It participates in porphyrin-containing compound metabolism; protoporphyrin-IX biosynthesis; protoporphyrinogen-IX from coproporphyrinogen-III (O2 route): step 1/1. Functionally, involved in the heme biosynthesis. Catalyzes the aerobic oxidative decarboxylation of propionate groups of rings A and B of coproporphyrinogen-III to yield the vinyl groups in protoporphyrinogen-IX. This Stenotrophomonas maltophilia (strain K279a) protein is Oxygen-dependent coproporphyrinogen-III oxidase.